Here is a 433-residue protein sequence, read N- to C-terminus: uncharacterized protein (433 aa).

Residues 258-304 are a coiled coil; that stretch reads KNIKSKLLLELRQLKNNITNLQNKITKTMDNVKKIIEEIEQSKNKVT.

The protein belongs to the mimivirus R160 family.

The protein resides in the virion. This is an uncharacterized protein from Acanthamoeba polyphaga mimivirus (APMV).